A 192-amino-acid chain; its full sequence is Adenylate kinase (192 aa).

10 to 15 (GAGKGT) provides a ligand contact to ATP. The tract at residues 30–56 (GTGGMLRALEPESGEQIHLRIDRGHFA) is NMP. AMP contacts are provided by residues Thr31, Arg36, 82–85 (GFPR), and Gln89. The tract at residues 123–133 (KRGETENRADD) is LID. Arg124 serves as a coordination point for ATP. The AMP site is built by Arg130 and Arg141. Asp169 is an ATP binding site.

Belongs to the adenylate kinase family. In terms of assembly, monomer.

The protein localises to the cytoplasm. It catalyses the reaction AMP + ATP = 2 ADP. The protein operates within purine metabolism; AMP biosynthesis via salvage pathway; AMP from ADP: step 1/1. Catalyzes the reversible transfer of the terminal phosphate group between ATP and AMP. Plays an important role in cellular energy homeostasis and in adenine nucleotide metabolism. The sequence is that of Adenylate kinase from Rhodopirellula baltica (strain DSM 10527 / NCIMB 13988 / SH1).